Here is a 143-residue protein sequence, read N- to C-terminus: Large ribosomal subunit protein uL15 (143 aa).

2 stretches are compositionally biased toward basic residues: residues 1-13 (MIRK…KMRG) and 23-38 (KKHR…GNAG). The tract at residues 1-38 (MIRKSKKITKMRGSRTCGYGEAKKHRGAGHRGGRGNAG) is disordered.

This sequence belongs to the universal ribosomal protein uL15 family. In terms of assembly, part of the 50S ribosomal subunit.

Binds to the 23S rRNA. This chain is Large ribosomal subunit protein uL15, found in Methanococcus maripaludis (strain C6 / ATCC BAA-1332).